The primary structure comprises 275 residues: 4-hydroxy-tetrahydrodipicolinate reductase (275 aa).

NAD(+) is bound by residues 8–13 (GATGRM), 100–102 (GTT), and 126–129 (SPNM). The Proton donor/acceptor role is filled by H160. H161 serves as a coordination point for (S)-2,3,4,5-tetrahydrodipicolinate. K164 functions as the Proton donor in the catalytic mechanism. 170–171 (GT) contributes to the (S)-2,3,4,5-tetrahydrodipicolinate binding site.

Belongs to the DapB family.

The protein resides in the cytoplasm. It carries out the reaction (S)-2,3,4,5-tetrahydrodipicolinate + NAD(+) + H2O = (2S,4S)-4-hydroxy-2,3,4,5-tetrahydrodipicolinate + NADH + H(+). The catalysed reaction is (S)-2,3,4,5-tetrahydrodipicolinate + NADP(+) + H2O = (2S,4S)-4-hydroxy-2,3,4,5-tetrahydrodipicolinate + NADPH + H(+). It functions in the pathway amino-acid biosynthesis; L-lysine biosynthesis via DAP pathway; (S)-tetrahydrodipicolinate from L-aspartate: step 4/4. Functionally, catalyzes the conversion of 4-hydroxy-tetrahydrodipicolinate (HTPA) to tetrahydrodipicolinate. The sequence is that of 4-hydroxy-tetrahydrodipicolinate reductase from Methanopyrus kandleri (strain AV19 / DSM 6324 / JCM 9639 / NBRC 100938).